Here is a 94-residue protein sequence, read N- to C-terminus: Cytochrome b-c1 complex subunit 8 (94 aa).

Over 1–49 the chain is Mitochondrial matrix; it reads MGGPHAKAYMGWWGSIGSPAQKGITTYTVSPYAQKPLNNIFHNAVFNTF. A helical membrane pass occupies residues 50-80; that stretch reads RRVKSQILYMALPAALYWAWWVNCRDYNAYL. The Mitochondrial intermembrane portion of the chain corresponds to 81 to 94; that stretch reads YTKAGREELERVNV.

This sequence belongs to the UQCRQ/QCR8 family. Component of the ubiquinol-cytochrome c oxidoreductase (cytochrome b-c1 complex, complex III, CIII), a multisubunit enzyme composed of 3 respiratory subunits cytochrome b, cytochrome c1 and Rieske protein, 2 core protein subunits, and additional low-molecular weight protein subunits. The complex exists as an obligatory dimer and forms supercomplexes (SCs) in the inner mitochondrial membrane with cytochrome c oxidase (complex IV, CIV).

The protein resides in the mitochondrion inner membrane. Functionally, component of the ubiquinol-cytochrome c oxidoreductase, a multisubunit transmembrane complex that is part of the mitochondrial electron transport chain which drives oxidative phosphorylation. The respiratory chain contains 3 multisubunit complexes succinate dehydrogenase (complex II, CII), ubiquinol-cytochrome c oxidoreductase (cytochrome b-c1 complex, complex III, CIII) and cytochrome c oxidase (complex IV, CIV), that cooperate to transfer electrons derived from NADH and succinate to molecular oxygen, creating an electrochemical gradient over the inner membrane that drives transmembrane transport and the ATP synthase. The cytochrome b-c1 complex catalyzes electron transfer from ubiquinol to cytochrome c, linking this redox reaction to translocation of protons across the mitochondrial inner membrane, with protons being carried across the membrane as hydrogens on the quinol. In the process called Q cycle, 2 protons are consumed from the matrix, 4 protons are released into the intermembrane space and 2 electrons are passed to cytochrome c. The protein is Cytochrome b-c1 complex subunit 8 (QCR8) of Kluyveromyces lactis (strain ATCC 8585 / CBS 2359 / DSM 70799 / NBRC 1267 / NRRL Y-1140 / WM37) (Yeast).